The sequence spans 616 residues: FNIP repeat-containing protein DDB_G0290639 (616 aa).

The stretch at 239–274 (FENNNNNNNNNNNNNNNNNNNNNNNNNNNNNKKTEK) forms a coiled coil. Residues 241–269 (NNNNNNNNNNNNNNNNNNNNNNNNNNNNN) show a composition bias toward low complexity. Positions 241 to 270 (NNNNNNNNNNNNNNNNNNNNNNNNNNNNNK) are disordered. FNIP repeat units lie at residues 337–379 (FEES…FNDG), 380–421 (FNQS…KLCN), 423–464 (FSQP…VFYD), 466–508 (FNQL…FSDG), 509–550 (FNQT…LIDS), and 552–593 (FQQP…ILDK).

The sequence is that of FNIP repeat-containing protein DDB_G0290639 from Dictyostelium discoideum (Social amoeba).